The primary structure comprises 390 residues: Phosphoglycerate kinase (390 aa).

Substrate contacts are provided by residues 21–23, arginine 36, 59–62, arginine 113, and arginine 146; these read DMN and HLGR. ATP-binding positions include lysine 197, glutamate 319, and 345–348; that span reads GGDT.

The protein belongs to the phosphoglycerate kinase family. Monomer.

It localises to the cytoplasm. The catalysed reaction is (2R)-3-phosphoglycerate + ATP = (2R)-3-phospho-glyceroyl phosphate + ADP. It participates in carbohydrate degradation; glycolysis; pyruvate from D-glyceraldehyde 3-phosphate: step 2/5. The protein is Phosphoglycerate kinase of Laribacter hongkongensis (strain HLHK9).